A 239-amino-acid polypeptide reads, in one-letter code: Small ribosomal subunit protein uS3 (239 aa).

Residues 39–107 enclose the KH type-2 domain; sequence VRQVLRKKMS…PVHINVIEVR (69 aa). The interval 214–239 is disordered; it reads SQEKQDDGSRGDRNADRSSRRSREVR. Positions 216 to 239 are enriched in basic and acidic residues; that stretch reads EKQDDGSRGDRNADRSSRRSREVR.

The protein belongs to the universal ribosomal protein uS3 family. In terms of assembly, part of the 30S ribosomal subunit. Forms a tight complex with proteins S10 and S14.

Functionally, binds the lower part of the 30S subunit head. Binds mRNA in the 70S ribosome, positioning it for translation. This is Small ribosomal subunit protein uS3 from Xylella fastidiosa (strain M23).